The primary structure comprises 1357 residues: DNA-directed RNA polymerase subunit beta (1357 aa).

This sequence belongs to the RNA polymerase beta chain family. In terms of assembly, the RNAP catalytic core consists of 2 alpha, 1 beta, 1 beta' and 1 omega subunit. When a sigma factor is associated with the core the holoenzyme is formed, which can initiate transcription.

It carries out the reaction RNA(n) + a ribonucleoside 5'-triphosphate = RNA(n+1) + diphosphate. DNA-dependent RNA polymerase catalyzes the transcription of DNA into RNA using the four ribonucleoside triphosphates as substrates. The protein is DNA-directed RNA polymerase subunit beta of Pseudomonas putida (Arthrobacter siderocapsulatus).